A 565-amino-acid chain; its full sequence is NAD-dependent malic enzyme (565 aa).

Tyr-104 functions as the Proton donor in the catalytic mechanism. Residue Arg-157 coordinates NAD(+). Catalysis depends on Lys-175, which acts as the Proton acceptor. Residues Glu-246, Asp-247, and Asp-270 each coordinate a divalent metal cation. Residues Asp-270 and Asn-418 each contribute to the NAD(+) site.

Belongs to the malic enzymes family. In terms of assembly, homotetramer. The cofactor is Mg(2+). Requires Mn(2+) as cofactor.

It carries out the reaction (S)-malate + NAD(+) = pyruvate + CO2 + NADH. The enzyme catalyses oxaloacetate + H(+) = pyruvate + CO2. The polypeptide is NAD-dependent malic enzyme (Escherichia coli (strain SMS-3-5 / SECEC)).